Reading from the N-terminus, the 196-residue chain is Cyclin-dependent kinase inhibitor 6 (196 aa).

2 disordered regions span residues 1–36 (MSER…PDSH) and 55–151 (ASDE…RKTP). The segment covering 124–139 (SEGLGETTTEMESSSA) has biased composition (low complexity). Thr152 carries the phosphothreonine; by KIN10 modification.

Belongs to the CDI family. ICK/KRP subfamily. In terms of assembly, specifically interacts with CDKA-1, but not with CDKB1-1. Interacts with CYCD1-1, CYCD4-1 and RHF1A. Binds to FBL17. Interacts with KIN10. Interacts with CYCD3-1. Post-translationally, ubiquitinated by RHF1A and SCF(FBL17). Ubiquitination leads to its subsequent degradation, thus controlling cell cycle progression. In terms of processing, the phosphorylation at Thr-152 by KIN10 represses its activity. Expressed in newly formed organs such as the shoot apex. Expressed in cotyledon, primary root and marginal region of the leaves as well as in developing pollen.

Its subcellular location is the nucleus. The protein localises to the nucleoplasm. Down-regulated by KIN10 under a phosphorylation-dependent manner. Functionally, binds and inhibits CYCD2-1/CDKA-1 complex kinase activity. Regulates cell division which is crucial for plant growth, development and morphogenesis. May inhibit CDK kinases specifically involved in the G1/S phase transition. The protein is Cyclin-dependent kinase inhibitor 6 (KRP6) of Arabidopsis thaliana (Mouse-ear cress).